Consider the following 474-residue polypeptide: MAKEISSELLNTILTRVGGPGNIASCGNCMTRLRLGVHDSSLVDPDIKTLEGVKGVILTSDQVQVVFGPGKAHRAAKAMSELLGEAPVQDAAEIAAQNKRQLKAKQTSGVQQFLAKFATIFTPLIPGFIAAGLLLGIATLIATVMHVPADAQGTLPDALNFMKVFSKGLFTFLVILVGYNAAQAFGGTGVNGAIIAALFLLGYNPAATTGYYAGFHDFFGLPIDPRGNIIGVLIAAWACARIEGMVRRFMPDDLDMLLTSLITLLITATLAYLIIMPLGGWLFEGMSWLFMHLNSNPLGCAVLAGLFLIAVVFGVHQGFIPVYLALMDSQGFNSLFPILSMAGAGQVGAALALYWRAQPHSALRSQVRGAIIPGLLGVGEPLIYGVTLPRMKPFITACLGGAAGGLFIGLIAWWGLPMGLNSAFGPSGLVALPLMTSAQGILPAMAVYAGGILVAWVCGFIFTTLFGCRNVNLD.

The PTS EIIB type-1 domain occupies 1–89 (MAKEISSELL…SELLGEAPVQ (89 aa)). At 1–123 (MAKEISSELL…LAKFATIFTP (123 aa)) the chain is on the cytoplasmic side. Cys29 acts as the Phosphocysteine intermediate; for EIIB activity in catalysis. Residues 115–474 (AKFATIFTPL…LFGCRNVNLD (360 aa)) enclose the PTS EIIC type-1 domain. The helical transmembrane segment at 124-144 (LIPGFIAAGLLLGIATLIATV) threads the bilayer. Topologically, residues 145 to 157 (MHVPADAQGTLPD) are periplasmic. Residues 158–178 (ALNFMKVFSKGLFTFLVILVG) traverse the membrane as a helical segment. Over 179-180 (YN) the chain is Cytoplasmic. The chain crosses the membrane as a helical span at residues 181-201 (AAQAFGGTGVNGAIIAALFLL). Topologically, residues 202-217 (GYNPAATTGYYAGFHD) are periplasmic. The chain crosses the membrane as a helical span at residues 218 to 238 (FFGLPIDPRGNIIGVLIAAWA). Residues 239–260 (CARIEGMVRRFMPDDLDMLLTS) lie on the Cytoplasmic side of the membrane. The helical transmembrane segment at 261 to 281 (LITLLITATLAYLIIMPLGGW) threads the bilayer. The Periplasmic portion of the chain corresponds to 282 to 301 (LFEGMSWLFMHLNSNPLGCA). Residues 302–322 (VLAGLFLIAVVFGVHQGFIPV) traverse the membrane as a helical segment. The Cytoplasmic portion of the chain corresponds to 323 to 334 (YLALMDSQGFNS). Residues 335-355 (LFPILSMAGAGQVGAALALYW) traverse the membrane as a helical segment. Over 356 to 368 (RAQPHSALRSQVR) the chain is Periplasmic. The helical transmembrane segment at 369-389 (GAIIPGLLGVGEPLIYGVTLP) threads the bilayer. The Cytoplasmic segment spans residues 390-393 (RMKP). A helical membrane pass occupies residues 394-414 (FITACLGGAAGGLFIGLIAWW). Residues 415 to 440 (GLPMGLNSAFGPSGLVALPLMTSAQG) are Periplasmic-facing. A helical membrane pass occupies residues 441 to 461 (ILPAMAVYAGGILVAWVCGFI). Residues 462-474 (FTTLFGCRNVNLD) lie on the Cytoplasmic side of the membrane.

It localises to the cell inner membrane. It catalyses the reaction N-acetyl-beta-D-muramate(out) + N(pros)-phospho-L-histidyl-[protein] = N-acetyl-beta-D-muramate 6-phosphate(in) + L-histidyl-[protein]. In terms of biological role, the phosphoenolpyruvate-dependent sugar phosphotransferase system (sugar PTS), a major carbohydrate active transport system, catalyzes the phosphorylation of incoming sugar substrates concomitantly with their translocation across the cell membrane. This system is involved in N-acetylmuramic acid (MurNAc) transport, yielding cytoplasmic MurNAc-6-P. Is also able to take up anhydro-N-acetylmuramic acid (anhMurNAc), but cannot phosphorylate the carbon 6, probably because of the 1,6-anhydro ring. The polypeptide is PTS system N-acetylmuramic acid-specific EIIBC component (murP) (Escherichia coli O157:H7).